The following is a 304-amino-acid chain: Acetyl-coenzyme A carboxylase carboxyl transferase subunit beta (304 aa).

The 270-residue stretch at 23–292 folds into the CoA carboxyltransferase N-terminal domain; sequence VWTKCDSCGQ…PNPDAPREGE (270 aa). Cysteine 27, cysteine 30, cysteine 46, and cysteine 49 together coordinate Zn(2+). Residues 27-49 form a C4-type zinc finger; that stretch reads CDSCGQVLYRAELERNLEVCPKC. The disordered stretch occupies residues 281-304; sequence PAPNPDAPREGEVVPPVPDQEPEA. The span at 295 to 304 shows a compositional bias: pro residues; it reads PPVPDQEPEA.

The protein belongs to the AccD/PCCB family. Acetyl-CoA carboxylase is a heterohexamer composed of biotin carboxyl carrier protein (AccB), biotin carboxylase (AccC) and two subunits each of ACCase subunit alpha (AccA) and ACCase subunit beta (AccD). Zn(2+) is required as a cofactor.

The protein resides in the cytoplasm. It catalyses the reaction N(6)-carboxybiotinyl-L-lysyl-[protein] + acetyl-CoA = N(6)-biotinyl-L-lysyl-[protein] + malonyl-CoA. It functions in the pathway lipid metabolism; malonyl-CoA biosynthesis; malonyl-CoA from acetyl-CoA: step 1/1. Functionally, component of the acetyl coenzyme A carboxylase (ACC) complex. Biotin carboxylase (BC) catalyzes the carboxylation of biotin on its carrier protein (BCCP) and then the CO(2) group is transferred by the transcarboxylase to acetyl-CoA to form malonyl-CoA. This Citrobacter koseri (strain ATCC BAA-895 / CDC 4225-83 / SGSC4696) protein is Acetyl-coenzyme A carboxylase carboxyl transferase subunit beta.